The chain runs to 361 residues: Peptide chain release factor 1 (361 aa).

An N5-methylglutamine modification is found at glutamine 235.

This sequence belongs to the prokaryotic/mitochondrial release factor family. In terms of processing, methylated by PrmC. Methylation increases the termination efficiency of RF1.

The protein localises to the cytoplasm. Peptide chain release factor 1 directs the termination of translation in response to the peptide chain termination codons UAG and UAA. This chain is Peptide chain release factor 1, found in Xanthomonas euvesicatoria pv. vesicatoria (strain 85-10) (Xanthomonas campestris pv. vesicatoria).